Consider the following 303-residue polypeptide: 2-dehydropantoate 2-reductase (303 aa).

NADP(+) contacts are provided by residues 7-12, Asn98, and Ala122; that span reads GCGALG. Asn98 serves as a coordination point for substrate. Lys176 (proton donor) is an active-site residue. Asn180, Asn184, Asn194, and Ser244 together coordinate substrate. NADP(+) is bound at residue Glu256.

It belongs to the ketopantoate reductase family. In terms of assembly, monomer.

Its subcellular location is the cytoplasm. It carries out the reaction (R)-pantoate + NADP(+) = 2-dehydropantoate + NADPH + H(+). It functions in the pathway cofactor biosynthesis; (R)-pantothenate biosynthesis; (R)-pantoate from 3-methyl-2-oxobutanoate: step 2/2. Catalyzes the NADPH-dependent reduction of ketopantoate into pantoic acid. The polypeptide is 2-dehydropantoate 2-reductase (panE) (Salmonella typhi).